Here is a 390-residue protein sequence, read N- to C-terminus: Two-component response regulator ORR29 (390 aa).

The 118-residue stretch at 13–130 (SAMVIDEDKC…TIKNLWQYVD (118 aa)) folds into the Response regulatory domain. Asp65 is modified (4-aspartylphosphate). Residues 169–226 (KKYYLMWTPHLQKKFLHALQILGKDASPKNIKKIMGVDNIDCRQIAAHLQKHRLRLTK) constitute a DNA-binding region (myb-like GARP). Disordered stretches follow at residues 233–271 (FTTD…QPTE) and 303–339 (SKHS…SGDH). Positions 257 to 271 (NASTLQPRSNTQPTE) are enriched in polar residues.

This sequence belongs to the ARR family. Type-B subfamily. Post-translationally, two-component system major event consists of a His-to-Asp phosphorelay between a sensor histidine kinase (HK) and a response regulator (RR). In plants, the His-to-Asp phosphorelay involves an additional intermediate named Histidine-containing phosphotransfer protein (HPt). This multistep phosphorelay consists of a His-Asp-His-Asp sequential transfer of a phosphate group between first a His and an Asp of the HK protein, followed by the transfer to a conserved His of the HPt protein and finally the transfer to an Asp in the receiver domain of the RR protein.

It localises to the cytoplasm. The protein resides in the cytosol. The protein localises to the nucleus. In terms of biological role, transcriptional activator that binds specific DNA sequence. Functions as a response regulator involved in His-to-Asp phosphorelay signal transduction system. Phosphorylation of the Asp residue in the receiver domain activates the ability of the protein to promote the transcription of target genes. May directly activate some type-A response regulators in response to cytokinins. Functions as a response regulator in response to cytokinins. The polypeptide is Two-component response regulator ORR29 (Oryza sativa subsp. japonica (Rice)).